The sequence spans 836 residues: Taste receptor type 1 member 2 (836 aa).

The first 19 residues, 1 to 19 (MGPRAKAVCSLFILLQVLA), serve as a signal peptide directing secretion. At 20-565 (EPAENSDFYL…AFLEWHEPST (546 aa)) the chain is on the extracellular side. N84, N292, N312, N351, N427, N479, N486, N526, and N546 each carry an N-linked (GlcNAc...) asparagine glycan. Residues 566 to 586 (IFVVMLTILGFLSTLAIMVIF) traverse the membrane as a helical segment. Residues 587-601 (WRHLHTPVVRSAGGP) lie on the Cytoplasmic side of the membrane. The chain crosses the membrane as a helical span at residues 602-622 (MCFLMLVPLLLAYAMVPMYIG). Residues 623–634 (QPTFFSCLWRQT) lie on the Extracellular side of the membrane. Residues 635–655 (FFTLCFTICISCITVRSFQIV) form a helical membrane-spanning segment. Residues 656 to 680 (CIFKMARRLPRAYGYWVRCHGPYVF) are Cytoplasmic-facing. The helical transmembrane segment at 681–701 (VASFMVLKVVIVAGNVLATTA) threads the bilayer. Residues 702 to 724 (NPTARPDPDDPNIMVLSCNYRRA) lie on the Extracellular side of the membrane. Residues 725–745 (LLFNTSLDLLLSVAGFSFAYM) form a helical membrane-spanning segment. Residues 746–757 (GKELPTNYNEAK) are Cytoplasmic-facing. Residues 758–778 (FITLCMTFYFTSSVSLCTFMS) form a helical membrane-spanning segment. Topologically, residues 779-781 (VYD) are extracellular. The chain crosses the membrane as a helical span at residues 782–802 (GVLVTILDLLITVLNLLGISF). At 803-836 (GYFGPKCYMVLFYPERNTQVYFSSMIQGYTMGKD) the chain is on the cytoplasmic side.

Belongs to the G-protein coupled receptor 3 family. TAS1R subfamily. Forms heterodimers with TAS1R3.

The protein localises to the cell membrane. Functionally, putative taste receptor. TAS1R2/TAS1R3 recognizes diverse natural and synthetic sweeteners. The protein is Taste receptor type 1 member 2 (TAS1R2) of Canis lupus familiaris (Dog).